A 77-amino-acid chain; its full sequence is uncharacterized protein (77 aa).

2 disordered regions span residues 1–34 (MSRAYLADNDKGWAKKKGADSHATPRPHKQTKMN) and 56–77 (LDGDIRRGGNKKSERVSGFSGR). Over residues 8–20 (DNDKGWAKKKGAD) the composition is skewed to basic and acidic residues. Residues 25 to 34 (PRPHKQTKMN) are compositionally biased toward basic residues. Basic and acidic residues predominate over residues 56–70 (LDGDIRRGGNKKSER).

This is an uncharacterized protein from Dictyostelium discoideum (Social amoeba).